The sequence spans 174 residues: Flavodoxin (174 aa).

A Flavodoxin-like domain is found at 4–166 (IGIFFGSDTG…RIIQWTKKIK (163 aa)).

The protein belongs to the flavodoxin family. FMN is required as a cofactor.

Its function is as follows. Low-potential electron donor to a number of redox enzymes. The chain is Flavodoxin (fldA) from Buchnera aphidicola subsp. Baizongia pistaciae (strain Bp).